Reading from the N-terminus, the 347-residue chain is Protein YIPF3 (347 aa).

Residues 1–28 (MATQAAPASGVRNGAGPEWGGFEENIQG) are disordered. A2 carries the N-acetylalanine modification. Over 2-145 (ATQAAPASGV…PIKMVNFPQK (144 aa)) the chain is Cytoplasmic. Residues 146–166 (VAGELYGPLMLVFTLVAILLH) traverse the membrane as a helical segment. Topologically, residues 167-184 (GMKTSDTIIREGTLMGTA) are lumenal. The chain crosses the membrane as a helical span at residues 185 to 205 (IGTCFGYWLGVSSFIYFLAYL). Residues 206 to 211 (CNAQIT) are Cytoplasmic-facing. Residues 212-234 (MLQMLALLGYGLFGHCIVLFITY) traverse the membrane as a helical segment. The Lumenal portion of the chain corresponds to 235-237 (NIH). Residues 238-260 (LHALFYLFWLLLGGLSTLRMVAV) form a helical membrane-spanning segment. The Cytoplasmic segment spans residues 261-271 (LVSRTVGPTQR). Residues 272-292 (LLLCGTLAALHMLFLLYLHFA) form a helical membrane-spanning segment. At 293–347 (YHKVVEGILDTLEGPNIPPMQRVPRDIPAVLPAAKLPVAVVNATAKAIAVTLQSH) the chain is on the lumenal side. Residue N334 is glycosylated (N-linked (GlcNAc...) asparagine).

It belongs to the YIP1 family. In terms of assembly, interacts with YIPF4 and YIPF5.

The protein resides in the cell membrane. It localises to the golgi apparatus. Its subcellular location is the cis-Golgi network membrane. The protein localises to the cytoplasm. Its function is as follows. Involved in the maintenance of the Golgi structure. May play a role in hematopoiesis. The protein is Protein YIPF3 (Yipf3) of Rattus norvegicus (Rat).